The primary structure comprises 337 residues: Casein kinase I isoform alpha-like (337 aa).

Lys8 is subject to N6-acetyllysine. The Protein kinase domain occupies 17 to 285; that stretch reads YKLVRKIGSG…YLRQLFRILF (269 aa). ATP-binding positions include 23-31 and Lys46; that span reads IGSGSFGDV. Asp136 serves as the catalytic Proton acceptor. Positions 309–325 are enriched in low complexity; that stretch reads AASSSGQGQQAQTQTGK. Residues 309–337 are disordered; sequence AASSSGQGQQAQTQTGKQTEKNKNNVKDN. Positions 326–337 are enriched in basic and acidic residues; it reads QTEKNKNNVKDN.

This sequence belongs to the protein kinase superfamily. CK1 Ser/Thr protein kinase family. Casein kinase I subfamily. As to quaternary structure, interacts with FAM83A, FAM83B, FAM83C, FAM83D, FAM83E, FAM83F, FAM83G and FAM83H (via DUF1669).

Its subcellular location is the cytoplasm. The catalysed reaction is L-seryl-[protein] + ATP = O-phospho-L-seryl-[protein] + ADP + H(+). It catalyses the reaction L-threonyl-[protein] + ATP = O-phospho-L-threonyl-[protein] + ADP + H(+). Its function is as follows. Casein kinases are operationally defined by their preferential utilization of acidic proteins such as caseins as substrates. It can phosphorylate a large number of proteins. Participates in Wnt signaling. This is Casein kinase I isoform alpha-like (CSNK1A1L) from Homo sapiens (Human).